A 285-amino-acid chain; its full sequence is Malonyl-[acyl-carrier protein] O-methyltransferase (285 aa).

This sequence belongs to the methyltransferase superfamily.

The catalysed reaction is malonyl-[ACP] + S-adenosyl-L-methionine = malonyl-[ACP] methyl ester + S-adenosyl-L-homocysteine. The protein operates within cofactor biosynthesis; biotin biosynthesis. Its function is as follows. Converts the free carboxyl group of a malonyl-thioester to its methyl ester by transfer of a methyl group from S-adenosyl-L-methionine (SAM). It allows to synthesize pimeloyl-ACP via the fatty acid synthetic pathway. This chain is Malonyl-[acyl-carrier protein] O-methyltransferase, found in Bacillus cytotoxicus (strain DSM 22905 / CIP 110041 / 391-98 / NVH 391-98).